Here is a 70-residue protein sequence, read N- to C-terminus: Large ribosomal subunit protein bL31 (70 aa).

The Zn(2+) site is built by cysteine 16, cysteine 18, cysteine 37, and cysteine 40.

It belongs to the bacterial ribosomal protein bL31 family. Type A subfamily. As to quaternary structure, part of the 50S ribosomal subunit. It depends on Zn(2+) as a cofactor.

Binds the 23S rRNA. In Shewanella denitrificans (strain OS217 / ATCC BAA-1090 / DSM 15013), this protein is Large ribosomal subunit protein bL31.